The sequence spans 454 residues: Glutamate mutase epsilon subunit (454 aa).

Arginine 67 contacts L-glutamate. Glycine 69 contributes to the adenosylcob(III)alamin binding site. Arginine 99 lines the L-glutamate pocket. Asparagine 122 serves as a coordination point for adenosylcob(III)alamin. L-glutamate contacts are provided by residues 148 to 149 (RH), glutamate 170, and tyrosine 176. Proline 179 serves as a coordination point for adenosylcob(III)alamin. Tyrosine 180 is a binding site for L-glutamate. Adenosylcob(III)alamin-binding residues include phenylalanine 296, lysine 325, glutamate 329, and isoleucine 333.

This sequence belongs to the methylaspartate mutase GlmE subunit family. Heterotetramer composed of 2 epsilon subunits (GlmE) and 2 sigma subunits (GlmS). GlmE exists as a homodimer and GlmS as a monomer. The cofactor is adenosylcob(III)alamin.

It carries out the reaction (2S,3S)-3-methyl-L-aspartate = L-glutamate. Its pathway is amino-acid degradation; L-glutamate degradation via mesaconate pathway; acetate and pyruvate from L-glutamate: step 1/4. In terms of biological role, catalyzes the carbon skeleton rearrangement of L-glutamate to L-threo-3-methylaspartate ((2S,3S)-3-methylaspartate). This Shigella dysenteriae serotype 1 (strain Sd197) protein is Glutamate mutase epsilon subunit.